The sequence spans 266 residues: Glucosamine-6-phosphate deaminase (266 aa).

The Proton acceptor; for enolization step role is filled by Asp72. The For ring-opening step role is filled by Asp141. His143 acts as the Proton acceptor; for ring-opening step in catalysis. The For ring-opening step role is filled by Glu148.

This sequence belongs to the glucosamine/galactosamine-6-phosphate isomerase family. NagB subfamily. As to quaternary structure, homohexamer.

It carries out the reaction alpha-D-glucosamine 6-phosphate + H2O = beta-D-fructose 6-phosphate + NH4(+). It participates in amino-sugar metabolism; N-acetylneuraminate degradation; D-fructose 6-phosphate from N-acetylneuraminate: step 5/5. Allosterically activated by N-acetylglucosamine 6-phosphate (GlcNAc6P). Functionally, catalyzes the reversible isomerization-deamination of glucosamine 6-phosphate (GlcN6P) to form fructose 6-phosphate (Fru6P) and ammonium ion. This chain is Glucosamine-6-phosphate deaminase, found in Yersinia enterocolitica serotype O:8 / biotype 1B (strain NCTC 13174 / 8081).